We begin with the raw amino-acid sequence, 294 residues long: UDP-N-acetylenolpyruvoylglucosamine reductase (294 aa).

The FAD-binding PCMH-type domain occupies 26 to 189 (VGGQADVLFK…IEAEFKGVSS (164 aa)). Residue R169 is part of the active site. The active-site Proton donor is the C218. Residue E288 is part of the active site.

Belongs to the MurB family. FAD is required as a cofactor.

The protein localises to the cytoplasm. The enzyme catalyses UDP-N-acetyl-alpha-D-muramate + NADP(+) = UDP-N-acetyl-3-O-(1-carboxyvinyl)-alpha-D-glucosamine + NADPH + H(+). It participates in cell wall biogenesis; peptidoglycan biosynthesis. Its function is as follows. Cell wall formation. In Wolbachia pipientis subsp. Culex pipiens (strain wPip), this protein is UDP-N-acetylenolpyruvoylglucosamine reductase.